A 280-amino-acid chain; its full sequence is DegV domain-containing protein spyM18_1709 (280 aa).

Residues 3–280 form the DegV domain; sequence WKIVTDSGCD…DGGLLMGYEI (278 aa). Positions 63 and 91 each coordinate hexadecanoate.

May bind long-chain fatty acids, such as palmitate, and may play a role in lipid transport or fatty acid metabolism. The polypeptide is DegV domain-containing protein spyM18_1709 (Streptococcus pyogenes serotype M18 (strain MGAS8232)).